The chain runs to 375 residues: Fasciculation and elongation protein zeta-2 (375 aa).

Positions 1–42 (MAADGDWQDFYEFQEPAGSVRDQENCNASPEAGAGAHAGGDS) are disordered. Phosphoserine occurs at positions 130, 171, and 190. Residues 156-177 (TADQVIEEIEEMMQESPDLEDD) are a coiled coil. Residues 206-281 (ERVKRLSVSE…AKKKKKLKNG (76 aa)) adopt a coiled-coil conformation. A disordered region spans residues 265-297 (QKEHKETAKKKKKLKNGSSQNGRNERSHMPGTR).

Belongs to the zygin family. Homodimer; disulfide-linked. May form heterodimers with FEZ1. Interacts with synaptotagmin.

In terms of biological role, involved in axonal outgrowth and fasciculation. The protein is Fasciculation and elongation protein zeta-2 (Fez2) of Rattus norvegicus (Rat).